We begin with the raw amino-acid sequence, 249 residues long: MFKIVYPNAKDFFSFINSITNVTDSIILNFTEDGIFSRHLTEDKVLMAIMRIPKDVLSEYSIDSPTSVKLDVSSVKKILSKASSKKATIELTETDSGLKIIIRDEKSGAKSTIYIKAEKGQVEQLTEPKVNLAVNFTTDESVLNVIAADVTLVGEEMRISTEEDKIKIEAGEEGKRYVAFLMKDKPLKELSIDTSASSSYSAEMFKDAVKGLRGFSAPTMVSFGENLPMKIDVEAVSGGHMIFWIAPRL.

The protein belongs to the PCNA family. As to quaternary structure, forms heterodimers with PCNA2, which then recruit PCNA3; does not form homotrimers. The heterodimers interact with RfcS homotetramers. Heterotrimer which circularizes head-to-tail (head is at N-terminus, tail is at C-terminus) to form a toroid; DNA passes through its center. Replication factor C (RFC) is required to load the toroid on the DNA. Heterotrimer interacts, probably via this subunit, with flap endonuclease 1 (fen), Hjc, Dpo4, and XPF.

One of the sliding clamp subunits that acts as a moving platform for DNA processing. Responsible for tethering the catalytic subunit of DNA polymerase to DNA during high-speed replication. Heterotrimer stimulates the Holliday junction resolvase Hjc. DNA polymerase I, DNA ligase and the flap endonuclease may be constitutively associated with the PCNA heterotrimer forming a scanning complex able to couple DNA synthesis and Okazaki fragment maturation. This is DNA polymerase sliding clamp 1 from Saccharolobus solfataricus (strain ATCC 35092 / DSM 1617 / JCM 11322 / P2) (Sulfolobus solfataricus).